A 161-amino-acid chain; its full sequence is Endoribonuclease YbeY (161 aa).

Residues His121, His125, and His131 each coordinate Zn(2+).

This sequence belongs to the endoribonuclease YbeY family. Zn(2+) serves as cofactor.

Its subcellular location is the cytoplasm. Functionally, single strand-specific metallo-endoribonuclease involved in late-stage 70S ribosome quality control and in maturation of the 3' terminus of the 16S rRNA. This Xanthomonas campestris pv. campestris (strain 8004) protein is Endoribonuclease YbeY.